Reading from the N-terminus, the 119-residue chain is Myohemerythrin-1 (119 aa).

Fe cation-binding residues include H25, H55, N58, E59, H74, H78, H107, and D112.

Belongs to the hemerythrin family. In terms of assembly, monomer. In terms of tissue distribution, muscle.

In terms of biological role, myohemerythrin is an oxygen-binding protein found in the retractor muscles of certain worms. The oxygen-binding site contains two iron atoms. This is Myohemerythrin-1 from Phascolopsis gouldii (Peanut worm).